The sequence spans 444 residues: Acyl-CoA 6-desaturase (444 aa).

Residues 1 to 131 (MGKGGNQGEG…DMNLFKTNHV (131 aa)) lie on the Cytoplasmic side of the membrane. The Cytochrome b5 heme-binding domain occupies 18–95 (VPTFSWEEIQ…LKPLLIGELA (78 aa)). A helical transmembrane segment spans residues 132–152 (FFLLLLAHIIALESIAWFTVF). Over 153–157 (YFGNG) the chain is Lumenal. The helical transmembrane segment at 158–178 (WISTLITAFVLATSQAQAGWL) threads the bilayer. The Cytoplasmic portion of the chain corresponds to 179 to 264 (QHDYGHLSVY…KYLPYNHQHE (86 aa)). The short motif at 180-184 (HDYGH) is the Histidine box-1 element. Positions 217–221 (HFQHH) match the Histidine box-2 motif. A helical membrane pass occupies residues 265 to 285 (YFFLIGPPLLIPMYFQYQIIM). Residues 286–305 (TMIVHKNWVDLAWAISYYIR) lie on the Lumenal side of the membrane. Residues 306 to 326 (FFITYIPFYGILGALLFLNFI) form a helical membrane-spanning segment. The Cytoplasmic portion of the chain corresponds to 327 to 444 (RFLESHWFVW…KLWLDAYLHK (118 aa)). A Histidine box-3 motif is present at residues 382–386 (QIEHH).

This sequence belongs to the fatty acid desaturase type 1 family.

The protein resides in the endoplasmic reticulum membrane. It catalyses the reaction (9Z,12Z)-octadecadienoyl-CoA + 2 Fe(II)-[cytochrome b5] + O2 + 2 H(+) = (6Z,9Z,12Z)-octadecatrienoyl-CoA + 2 Fe(III)-[cytochrome b5] + 2 H2O. It carries out the reaction (9Z,12Z,15Z)-octadecatrienoyl-CoA + 2 Fe(II)-[cytochrome b5] + O2 + 2 H(+) = (6Z,9Z,12Z,15Z)-octadecatetraenoyl-CoA + 2 Fe(III)-[cytochrome b5] + 2 H2O. The catalysed reaction is (9Z,12Z,15Z,18Z,21Z)-tetracosapentaenoyl-CoA + 2 Fe(II)-[cytochrome b5] + O2 + 2 H(+) = (6Z,9Z,12Z,15Z,18Z,21Z)-tetracosahexaenoyl-CoA + 2 Fe(III)-[cytochrome b5] + 2 H2O. The enzyme catalyses (11E)-octadecenoyl-CoA + 2 Fe(II)-[cytochrome b5] + O2 + 2 H(+) = (6Z,11E)-octadecadienoyl-CoA + 2 Fe(III)-[cytochrome b5] + 2 H2O. It catalyses the reaction (11Z,14Z)-eicosadienoyl-CoA + 2 Fe(II)-[cytochrome b5] + O2 + 2 H(+) = (8Z,11Z,14Z)-eicosatrienoyl-CoA + 2 Fe(III)-[cytochrome b5] + 2 H2O. It carries out the reaction (11Z,14Z,17Z)-eicosatrienoyl-CoA + 2 Fe(II)-[cytochrome b5] + O2 + 2 H(+) = (8Z,11Z,14Z,17Z)-eicosatetraenoyl-CoA + 2 Fe(III)-[cytochrome b5] + 2 H2O. It participates in lipid metabolism; polyunsaturated fatty acid biosynthesis. In terms of biological role, involved in the biosynthesis of highly unsaturated fatty acids (HUFA) from the essential polyunsaturated fatty acids (PUFA) linoleic acid (LA) (18:2n-6) and alpha-linolenic acid (ALA) (18:3n-3) precursors, acting as a fatty acyl-coenzyme A (CoA) desaturase that introduces a cis double bond at carbon 6 of the fatty acyl chain. Catalyzes the first and rate limiting step in this pathway which is the desaturation of LA (18:2n-6) and ALA (18:3n-3) into gamma-linoleate (GLA) (18:3n-6) and stearidonate (18:4n-3), respectively. Subsequently, in the biosynthetic pathway of HUFA n-3 series, it desaturates tetracosapentaenoate (24:5n-3) to tetracosahexaenoate (24:6n-3), which is then converted to docosahexaenoate (DHA)(22:6n-3), an important lipid for nervous system function. It can also desaturate (11E)-octadecenoate (trans-vaccenoate) at carbon 6 generating (6Z,11E)-octadecadienoate. In addition to Delta-6 activity, this enzyme exhibits Delta-8 activity with slight biases toward n-3 fatty acyl-CoA substrates. This Pongo abelii (Sumatran orangutan) protein is Acyl-CoA 6-desaturase (FADS2).